Here is a 173-residue protein sequence, read N- to C-terminus: Regulator of ribonuclease activity A (173 aa).

It belongs to the RraA family. As to quaternary structure, homotrimer. Binds to both RNA-binding sites in the C-terminal region of Rne and to RhlB.

The protein localises to the cytoplasm. Its function is as follows. Globally modulates RNA abundance by binding to RNase E (Rne) and regulating its endonucleolytic activity. Can modulate Rne action in a substrate-dependent manner by altering the composition of the degradosome. Modulates RNA-binding and helicase activities of the degradosome. In Vibrio vulnificus (strain CMCP6), this protein is Regulator of ribonuclease activity A.